The sequence spans 259 residues: MNQVAVVIGGGQTLGAFLCHGLAAEGYRVAVVDIQSDKAANVAQEINAEYGESMAYGFGADATSEQSVLALSRGVDEIFGRVDLLVYSAGIAKAAFISDFQLGDFDRSLQVNLVGYFLCAREFSRLMIRDGIQGRIIQINSKSGKVGSKHNSGYSAAKFGGVGLTQSLALDLAEYGITVHSLMLGNLLKSPMFQSLLPQYATKLGIKPDQVEQYYIDKVPLKRGCDYQDVLNMLLFYASPKASYCTGQSINVTGGQVMF.

4-33 (VAVVIGGGQTLGAFLCHGLAAEGYRVAVVD) is an NAD(+) binding site. Serine 141 contributes to the substrate binding site. The Proton acceptor role is filled by tyrosine 154.

This sequence belongs to the short-chain dehydrogenases/reductases (SDR) family. Homotetramer.

It catalyses the reaction D-sorbitol 6-phosphate + NAD(+) = beta-D-fructose 6-phosphate + NADH + H(+). Its pathway is carbohydrate metabolism; D-sorbitol degradation; D-fructose 6-phosphate from D-sorbitol 6-phosphate: step 1/1. The chain is Sorbitol-6-phosphate 2-dehydrogenase (srlD) from Escherichia coli (strain K12).